The chain runs to 86 residues: Defensin-like protein 97 (86 aa).

A signal peptide spans 1–27 (MGSLRVSTFAVAVVVCLSILLMSPTDG). 4 disulfide bridges follow: Cys31–Cys74, Cys38–Cys60, Cys44–Cys71, and Cys48–Cys73.

It belongs to the DEFL family.

The protein resides in the secreted. The sequence is that of Defensin-like protein 97 (LCR85) from Arabidopsis thaliana (Mouse-ear cress).